A 202-amino-acid chain; its full sequence is Small ribosomal subunit protein uS4c (202 aa).

An S4 RNA-binding domain is found at 90 to 158 (MRLDNIIFRL…ITKNIELSQK (69 aa)).

The protein belongs to the universal ribosomal protein uS4 family. As to quaternary structure, part of the 30S ribosomal subunit. Contacts protein S5. The interaction surface between S4 and S5 is involved in control of translational fidelity.

It is found in the plastid. The protein localises to the chloroplast. Its function is as follows. One of the primary rRNA binding proteins, it binds directly to 16S rRNA where it nucleates assembly of the body of the 30S subunit. With S5 and S12 plays an important role in translational accuracy. The sequence is that of Small ribosomal subunit protein uS4c (rps4) from Marchantia romanica (Liverwort).